The primary structure comprises 88 residues: Cell division topological specificity factor (88 aa).

This sequence belongs to the MinE family.

Its function is as follows. Prevents the cell division inhibition by proteins MinC and MinD at internal division sites while permitting inhibition at polar sites. This ensures cell division at the proper site by restricting the formation of a division septum at the midpoint of the long axis of the cell. In Escherichia fergusonii (strain ATCC 35469 / DSM 13698 / CCUG 18766 / IAM 14443 / JCM 21226 / LMG 7866 / NBRC 102419 / NCTC 12128 / CDC 0568-73), this protein is Cell division topological specificity factor.